The following is a 355-amino-acid chain: Protein-tyrosine sulfotransferase 1 (355 aa).

Residues 1–8 lie on the Cytoplasmic side of the membrane; that stretch reads MIGKLKQN. A helical; Signal-anchor for type II membrane protein transmembrane segment spans residues 9–25; it reads LLVACLVISSVTVFYLC. The Lumenal segment spans residues 26–355; it reads RHAMDCHHRI…QKSPEKPNPS (330 aa). Asn55 is a glycosylation site (N-linked (GlcNAc...) asparagine). Residue 76-80 participates in 3'-phosphoadenylyl sulfate binding; sequence RSGTT. Cys94 and Cys154 are joined by a disulfide. Glu97 serves as the catalytic Proton donor/acceptor. Residues 99 to 103 form an interaction with peptide substrate region; it reads RVIPR. 3'-phosphoadenylyl sulfate contacts are provided by Arg181, Ser189, and Arg193. Cys223 and Cys230 form a disulfide bridge. Residues Tyr235, 282–291, and Lys297 contribute to the 3'-phosphoadenylyl sulfate site; that span reads STDQVIKPVN. Residues 325–355 are disordered; sequence HANPPNYGRPDPLVLDNTRRLQKSPEKPNPS. Residues 341–355 are compositionally biased toward basic and acidic residues; sequence NTRRLQKSPEKPNPS.

The protein belongs to the protein sulfotransferase family.

The protein localises to the golgi apparatus membrane. The catalysed reaction is L-tyrosyl-[protein] + 3'-phosphoadenylyl sulfate = O-sulfo-L-tyrosine-[protein] + adenosine 3',5'-bisphosphate + H(+). Catalyzes the O-sulfation of tyrosine residues within acidic motifs of polypeptides, using 3'-phosphoadenylyl sulfate (PAPS) as cosubstrate. The chain is Protein-tyrosine sulfotransferase 1 (tpst1) from Danio rerio (Zebrafish).